We begin with the raw amino-acid sequence, 181 residues long: MVIGLKEKYKTTVTQALKEEFQYENIHEVPRFTKITINRGLGEASQNAKALESSIQELTLITGQKPIVTRAKKSIAGFKIREEVPIGIVVHLRKDKMYSFLEKLINLTLPRIRDFRGISPKSFDGKGNYNLGLREQLIFPEIDYDNIDQIRGLDISIVTTAKTDQEGLALLKKLGMPFRES.

It belongs to the universal ribosomal protein uL5 family. In terms of assembly, part of the 50S ribosomal subunit; contacts the 5S rRNA.

The protein localises to the plastid. The protein resides in the chloroplast. In terms of biological role, binds 5S rRNA, forms part of the central protuberance of the 50S subunit. This chain is Large ribosomal subunit protein uL5c (rpl5), found in Porphyra purpurea (Red seaweed).